Reading from the N-terminus, the 1201-residue chain is DNA-directed RNA polymerase subunit beta (1201 aa).

Residues 1165 to 1201 (DALSKFKQQQDEKAADKAAKADAAKPSETTNAQQDNQ) are disordered. Over residues 1172-1189 (QQQDEKAADKAAKADAAK) the composition is skewed to basic and acidic residues. Over residues 1191–1201 (SETTNAQQDNQ) the composition is skewed to polar residues.

This sequence belongs to the RNA polymerase beta chain family. As to quaternary structure, the RNAP catalytic core consists of 2 alpha, 1 beta, 1 beta' and 1 omega subunit. When a sigma factor is associated with the core the holoenzyme is formed, which can initiate transcription.

The catalysed reaction is RNA(n) + a ribonucleoside 5'-triphosphate = RNA(n+1) + diphosphate. DNA-dependent RNA polymerase catalyzes the transcription of DNA into RNA using the four ribonucleoside triphosphates as substrates. The protein is DNA-directed RNA polymerase subunit beta of Lactiplantibacillus plantarum (strain ATCC BAA-793 / NCIMB 8826 / WCFS1) (Lactobacillus plantarum).